A 404-amino-acid polypeptide reads, in one-letter code: Voltage-gated potassium channel subunit beta-3 (404 aa).

Positions 1-14 are enriched in polar residues; it reads MQVSIACTEQNLRS. Residues 1–77 are disordered; it reads MQVSIACTEQ…LRESTGRGTG (77 aa). Gly residues predominate over residues 28-50; that stretch reads PGGGNGGPAGGGHGNPPGGGGSG. NADP(+)-binding residues include Thr97, Trp98, Gln104, and Asp126. The active-site Proton donor/acceptor is Tyr131. NADP(+) is bound by residues Asn199, Ser229, Arg230, Gln255, Trp284, Pro286, Leu287, Ala288, Cys289, Lys295, Arg305, Gly364, Ser366, Gln370, and Glu373.

Belongs to the shaker potassium channel beta subunit family. As to quaternary structure, forms heteromultimeric complex with alpha subunits. Interacts with KCNA5 and KCNB2. As to expression, brain specific. Most prominent expression in cerebellum. Weaker signals detected in cortex, occipital lobe, frontal lobe and temporal lobe. Not detected in spinal cord, heart, lung, liver, kidney, pancreas, placenta and skeletal muscle.

It is found in the cytoplasm. Its function is as follows. Regulatory subunit of the voltage-gated potassium (Kv) channels composed of pore-forming and potassium-conducting alpha subunits and of regulatory beta subunit. The beta-3/KCNAB3 subunit may mediate closure of potassium channels. Increases inactivation of Kv1.5/KCNA5 alpha subunit-containing channels. May display nicotinamide adenine dinucleotide phosphate (NADPH)-dependent aldoketoreductase activity. The binding of oxidized and reduced NADP(H) cofactors may be required for the regulation of potassium channel activity. In Homo sapiens (Human), this protein is Voltage-gated potassium channel subunit beta-3.